Here is a 483-residue protein sequence, read N- to C-terminus: UDP-N-acetylmuramoylalanine--D-glutamate ligase (483 aa).

An ATP-binding site is contributed by 119–125; that stretch reads GTNGKTT.

It belongs to the MurCDEF family.

Its subcellular location is the cytoplasm. It catalyses the reaction UDP-N-acetyl-alpha-D-muramoyl-L-alanine + D-glutamate + ATP = UDP-N-acetyl-alpha-D-muramoyl-L-alanyl-D-glutamate + ADP + phosphate + H(+). It functions in the pathway cell wall biogenesis; peptidoglycan biosynthesis. Functionally, cell wall formation. Catalyzes the addition of glutamate to the nucleotide precursor UDP-N-acetylmuramoyl-L-alanine (UMA). This Mycolicibacterium vanbaalenii (strain DSM 7251 / JCM 13017 / BCRC 16820 / KCTC 9966 / NRRL B-24157 / PYR-1) (Mycobacterium vanbaalenii) protein is UDP-N-acetylmuramoylalanine--D-glutamate ligase.